Consider the following 177-residue polypeptide: Immunity protein CdiI-YPIII (177 aa).

As to quaternary structure, interacts with the C-terminal DNase fragment (residues 954-1077) of cognate toxin CdiA-YPIII.

Functionally, immunity protein component of a toxin-immunity protein module, which functions as a cellular contact-dependent growth inhibition (CDI) system. CDI modules allow bacteria to communicate with and inhibit the growth of closely related neighboring bacteria in a contact-dependent fashion. Neutralizes the toxic activity of cognate toxin CdiA-YPIII (residues 954-1077). Does not inhibit toxic activity of CdiA from other toxin-immunity modules. This Yersinia pseudotuberculosis serotype O:3 (strain YPIII) protein is Immunity protein CdiI-YPIII.